Consider the following 164-residue polypeptide: NADPH-dependent 7-cyano-7-deazaguanine reductase (164 aa).

C55 functions as the Thioimide intermediate in the catalytic mechanism. D62 serves as the catalytic Proton donor. Substrate contacts are provided by residues 77 to 79 (VES) and 96 to 97 (HE).

The protein belongs to the GTP cyclohydrolase I family. QueF type 1 subfamily.

It is found in the cytoplasm. It catalyses the reaction 7-aminomethyl-7-carbaguanine + 2 NADP(+) = 7-cyano-7-deazaguanine + 2 NADPH + 3 H(+). It participates in tRNA modification; tRNA-queuosine biosynthesis. Functionally, catalyzes the NADPH-dependent reduction of 7-cyano-7-deazaguanine (preQ0) to 7-aminomethyl-7-deazaguanine (preQ1). The protein is NADPH-dependent 7-cyano-7-deazaguanine reductase of Bacillus velezensis (strain DSM 23117 / BGSC 10A6 / LMG 26770 / FZB42) (Bacillus amyloliquefaciens subsp. plantarum).